Reading from the N-terminus, the 370-residue chain is Pyrimidine monooxygenase RutA (370 aa).

Residues 49–50, asparagine 115, glutamate 124, 140–141, and serine 190 each bind FMN; these read IK and RY.

This sequence belongs to the NtaA/SnaA/DszA monooxygenase family. RutA subfamily.

It catalyses the reaction uracil + FMNH2 + NADH + O2 = (Z)-3-ureidoacrylate + FMN + NAD(+) + H2O + H(+). The catalysed reaction is thymine + FMNH2 + NADH + O2 = (Z)-2-methylureidoacrylate + FMN + NAD(+) + H2O + H(+). Its function is as follows. Catalyzes the pyrimidine ring opening between N-3 and C-4 by an unusual flavin hydroperoxide-catalyzed mechanism, adding oxygen atoms in the process to yield ureidoacrylate peracid, that immediately reacts with FMN forming ureidoacrylate and FMN-N(5)-oxide. The FMN-N(5)-oxide reacts spontaneously with NADH to produce FMN. Requires the flavin reductase RutF to regenerate FMN in vivo. The polypeptide is Pyrimidine monooxygenase RutA (Variovorax paradoxus (strain S110)).